A 743-amino-acid polypeptide reads, in one-letter code: Putative pre-mRNA-splicing factor ATP-dependent RNA helicase DHX32 (743 aa).

Residue Met-1 is modified to N-acetylmethionine. The tract at residues 1-28 (MEEEGLECPNSSSEKRYFPESLDSSDGD) is disordered. The region spanning 72–238 (MENLLQNQIV…YGNVPVIEVK (167 aa)) is the Helicase ATP-binding domain. 85–92 (GDAKCGKS) lines the ATP pocket. The DEAH box motif lies at 185–188 (DDIH).

This sequence belongs to the DEAD box helicase family. DEAH subfamily. Expressed in lymphoid tissues (at protein level). Expressed in brain, heart, skeletal muscle, colon, thymus, spleen, kidney, liver, small intestine, placenta, lung, lymphoid tissues and blood leukocytes.

It is found in the nucleus. Its subcellular location is the mitochondrion. The enzyme catalyses ATP + H2O = ADP + phosphate + H(+). This chain is Putative pre-mRNA-splicing factor ATP-dependent RNA helicase DHX32 (DHX32), found in Homo sapiens (Human).